The chain runs to 87 residues: uncharacterized protein (87 aa).

The signal sequence occupies residues 1 to 19 (MLVLLVAVLVTAVYAFVHA). Residues 39 to 59 (LVILGAAVALASILYPVLGVL) traverse the membrane as a helical segment.

To M.leprae ML2453.

Its subcellular location is the membrane. This is an uncharacterized protein from Mycobacterium bovis (strain ATCC BAA-935 / AF2122/97).